The sequence spans 216 residues: tRNA (guanine-N(7)-)-methyltransferase (216 aa).

Positions 44, 69, 97, and 119 each coordinate S-adenosyl-L-methionine. Aspartate 119 is a catalytic residue. Substrate contacts are provided by residues lysine 123, aspartate 155, and 192–195; that span reads TEYE.

The protein belongs to the class I-like SAM-binding methyltransferase superfamily. TrmB family.

It catalyses the reaction guanosine(46) in tRNA + S-adenosyl-L-methionine = N(7)-methylguanosine(46) in tRNA + S-adenosyl-L-homocysteine. Its pathway is tRNA modification; N(7)-methylguanine-tRNA biosynthesis. Catalyzes the formation of N(7)-methylguanine at position 46 (m7G46) in tRNA. The protein is tRNA (guanine-N(7)-)-methyltransferase of Lysinibacillus sphaericus (strain C3-41).